A 334-amino-acid polypeptide reads, in one-letter code: Triplex capsid protein 1 (334 aa).

This sequence belongs to the herpesviridae TRX1 protein family. In terms of assembly, interacts with TRX2, MCP and capsid vertex component 2/CVC2.

The protein resides in the virion. It is found in the host nucleus. In terms of biological role, structural component of the T=16 icosahedral capsid. The capsid is composed of pentamers and hexamers of major capsid protein/MCP, which are linked together by heterotrimers called triplexes. These triplexes are formed by a single molecule of triplex protein 1/TRX1 and two copies of triplex protein 2/TRX2. Additionally, TRX1 is required for efficient transport of TRX2 to the nucleus, which is the site of capsid assembly. The sequence is that of Triplex capsid protein 1 from Connochaetes taurinus (Blue wildebeest).